Here is a 25-residue protein sequence, read N- to C-terminus: MIINNNISALNANRQLNLTGNSMTK.

Belongs to the bacterial flagellin family. The flagellum consists of an outer layer composed of two sheath proteins, flaA1 (44 kDa) and flaA2 (35 kDa) around a core that contains three proteins flaB1 (37 kDa), flaB2 (34 kDa) and flaB3 (32 kDa).

It localises to the periplasmic flagellum. It is found in the periplasm. Component of the core of the flagella. This chain is Flagellar filament core protein flaB3 (flaB3), found in Brachyspira hyodysenteriae (Treponema hyodysenteriae).